We begin with the raw amino-acid sequence, 941 residues long: Isoleucine--tRNA ligase (941 aa).

A 'HIGH' region motif is present at residues 58 to 68 (PYANGDIHIGH). Residue Glu-563 coordinates L-isoleucyl-5'-AMP. Positions 604 to 608 (KMSKS) match the 'KMSKS' region motif. Residue Lys-607 coordinates ATP. Zn(2+) contacts are provided by Cys-904, Cys-907, Cys-924, and Cys-927.

Belongs to the class-I aminoacyl-tRNA synthetase family. IleS type 1 subfamily. Monomer. Requires Zn(2+) as cofactor.

It is found in the cytoplasm. It carries out the reaction tRNA(Ile) + L-isoleucine + ATP = L-isoleucyl-tRNA(Ile) + AMP + diphosphate. In terms of biological role, catalyzes the attachment of isoleucine to tRNA(Ile). As IleRS can inadvertently accommodate and process structurally similar amino acids such as valine, to avoid such errors it has two additional distinct tRNA(Ile)-dependent editing activities. One activity is designated as 'pretransfer' editing and involves the hydrolysis of activated Val-AMP. The other activity is designated 'posttransfer' editing and involves deacylation of mischarged Val-tRNA(Ile). This Halorhodospira halophila (strain DSM 244 / SL1) (Ectothiorhodospira halophila (strain DSM 244 / SL1)) protein is Isoleucine--tRNA ligase.